Reading from the N-terminus, the 243-residue chain is 1-(5-phosphoribosyl)-5-[(5-phosphoribosylamino)methylideneamino] imidazole-4-carboxamide isomerase (243 aa).

D10 (proton acceptor) is an active-site residue. D129 (proton donor) is an active-site residue.

This sequence belongs to the HisA/HisF family.

Its subcellular location is the cytoplasm. The enzyme catalyses 1-(5-phospho-beta-D-ribosyl)-5-[(5-phospho-beta-D-ribosylamino)methylideneamino]imidazole-4-carboxamide = 5-[(5-phospho-1-deoxy-D-ribulos-1-ylimino)methylamino]-1-(5-phospho-beta-D-ribosyl)imidazole-4-carboxamide. It functions in the pathway amino-acid biosynthesis; L-histidine biosynthesis; L-histidine from 5-phospho-alpha-D-ribose 1-diphosphate: step 4/9. The protein is 1-(5-phosphoribosyl)-5-[(5-phosphoribosylamino)methylideneamino] imidazole-4-carboxamide isomerase of Saccharopolyspora erythraea (strain ATCC 11635 / DSM 40517 / JCM 4748 / NBRC 13426 / NCIMB 8594 / NRRL 2338).